The primary structure comprises 323 residues: ADP-ribose glycohydrolase MACROD1 (323 aa).

Residues Lys94, Lys101, and Lys127 each carry the N6-succinyllysine modification. Lys136 participates in a covalent cross-link: Glycyl lysine isopeptide (Lys-Gly) (interchain with G-Cter in SUMO2). Positions 139-320 constitute a Macro domain; sequence DPKYKKDKQL…IYRERLPHYF (182 aa). A substrate-binding site is contributed by 157–159; it reads GDI. N6-acetyllysine is present on Lys161. Residues 170 to 172, 177 to 182, 265 to 271, and Phe304 contribute to the substrate site; these read AAN, GGGGVD, and ISTGVFG.

The protein belongs to the MacroD-type family. MacroD1/2-like subfamily. In terms of assembly, interacts with ESR1; Interacts in a manner that is estrogen independent but is enhanced by estrogen. Interacts (via macro domain) with AR.

The protein localises to the nucleus. The catalysed reaction is 3''-O-acetyl-ADP-D-ribose + H2O = ADP-D-ribose + acetate + H(+). It catalyses the reaction 2''-O-acetyl-ADP-D-ribose + H2O = ADP-D-ribose + acetate + H(+). The enzyme catalyses 4-O-(ADP-D-ribosyl)-L-aspartyl-[protein] + H2O = L-aspartyl-[protein] + ADP-D-ribose + H(+). It carries out the reaction 5-O-(ADP-D-ribosyl)-L-glutamyl-[protein] + H2O = L-glutamyl-[protein] + ADP-D-ribose + H(+). The catalysed reaction is alpha-NAD(+) + H2O = ADP-D-ribose + nicotinamide + H(+). Subject to competitive inhibition by the product ADP-ribose. Its function is as follows. Removes ADP-ribose from aspartate and glutamate residues in proteins bearing a single ADP-ribose moiety. Inactive towards proteins bearing poly-ADP-ribose. Deacetylates O-acetyl-ADP ribose, a signaling molecule generated by the deacetylation of acetylated lysine residues in histones and other proteins. Plays a role in estrogen signaling. Binds to androgen receptor (AR) and amplifies the transactivation function of AR in response to androgen. May play an important role in carcinogenesis and/or progression of hormone-dependent cancers by feed-forward mechanism that activates ESR1 transactivation. Could be an ESR1 coactivator, providing a positive feedback regulatory loop for ESR1 signal transduction. Could be involved in invasive growth by down-regulating CDH1 in endometrial cancer cells. Enhances ESR1-mediated transcription activity. In Mus musculus (Mouse), this protein is ADP-ribose glycohydrolase MACROD1.